We begin with the raw amino-acid sequence, 307 residues long: uncharacterized protein (307 aa).

Basic and acidic residues-rich tracts occupy residues Thr-42–Pro-52 and Gln-112–His-121. The interval Thr-42–Ala-153 is disordered. The span at Lys-129–Ser-139 shows a compositional bias: basic residues.

This is an uncharacterized protein from Mus musculus (Mouse).